A 205-amino-acid polypeptide reads, in one-letter code: Ribonuclease HII (205 aa).

The RNase H type-2 domain occupies 1–203; sequence MKAGIDEAGK…VSNLRQKTLD (203 aa). Residues aspartate 6 and glutamate 7 each coordinate a divalent metal cation. Arginine 46 contacts substrate. Aspartate 101 is a binding site for a divalent metal cation. The substrate site is built by lysine 143, arginine 146, and tyrosine 164.

Belongs to the RNase HII family. The cofactor is Mn(2+). It depends on Mg(2+) as a cofactor.

It localises to the cytoplasm. The enzyme catalyses Endonucleolytic cleavage to 5'-phosphomonoester.. Functionally, endonuclease that specifically degrades the RNA of RNA-DNA hybrids. The chain is Ribonuclease HII (rnhB) from Archaeoglobus fulgidus (strain ATCC 49558 / DSM 4304 / JCM 9628 / NBRC 100126 / VC-16).